Here is a 444-residue protein sequence, read N- to C-terminus: D(2) dopamine receptor (444 aa).

Over Met-1–Tyr-37 the chain is Extracellular. N-linked (GlcNAc...) asparagine glycosylation is found at Asn-5, Asn-17, and Asn-23. The helical transmembrane segment at Ala-38–Ser-60 threads the bilayer. At Arg-61–Asn-70 the chain is on the cytoplasmic side. A helical membrane pass occupies residues Tyr-71 to Tyr-93. Over Leu-94–Asp-108 the chain is Extracellular. Cysteines 107 and 182 form a disulfide. Residues Ile-109–Ile-130 form a helical membrane-spanning segment. The Cytoplasmic portion of the chain corresponds to Asp-131 to Arg-151. Residues Val-152–Phe-172 form a helical membrane-spanning segment. Residues Gly-173 to Ala-188 are Extracellular-facing. The chain crosses the membrane as a helical span at residues Phe-189–Tyr-213. The interaction with PPP1R9B stretch occupies residues Lys-211–Gln-374. The Cytoplasmic portion of the chain corresponds to Ile-214–Gln-374. The segment at Glu-282–Gly-329 is disordered. The chain crosses the membrane as a helical span at residues Met-375–Leu-396. The Extracellular portion of the chain corresponds to Asn-397–Ser-410. Cysteines 400 and 402 form a disulfide. The chain crosses the membrane as a helical span at residues Ala-411–Ile-432. The Cytoplasmic portion of the chain corresponds to Glu-433–Cys-444. Cys-444 carries S-palmitoyl cysteine lipidation.

The protein belongs to the G-protein coupled receptor 1 family. Forms homo- and heterooligomers with DRD4. The interaction with DRD4 may modulate agonist-induced downstream signaling. Interacts with CADPS and CADPS2. Interacts with GPRASP1, PPP1R9B and CLIC6. Interacts with ARRB2. Interacts with HTR2A. Interacts with DRD1. In terms of assembly, interacts with KCNA2. In terms of processing, palmitoylated. Palmitoylation which is required for proper localization to the plasma membrane and stability of the receptor could be carried on by ZDHHC4, ZDHHC3 and ZDHHC8. In terms of tissue distribution, expressed in retinal hyaloid vessels at postnatal day 6. As to expression, expressed in the pituitary gland, stratum, brain stem and cortex. Expressed in the brain stem.

It localises to the cell membrane. The protein resides in the golgi apparatus membrane. Dopamine receptor whose activity is mediated by G proteins which inhibit adenylyl cyclase. Positively regulates postnatal regression of retinal hyaloid vessels via suppression of VEGFR2/KDR activity, downstream of OPN5. The protein is D(2) dopamine receptor (Drd2) of Mus musculus (Mouse).